We begin with the raw amino-acid sequence, 380 residues long: NADPH quinone oxidoreductase (380 aa).

A mitochondrion-targeting transit peptide spans 1–17 (MSSFLSKRFISTTQRAM).

This sequence belongs to the zinc-containing alcohol dehydrogenase family. Quinone oxidoreductase subfamily. Homodimer.

The protein resides in the mitochondrion. It carries out the reaction a quinone + NADH + H(+) = a quinol + NAD(+). The catalysed reaction is a quinone + NADPH + H(+) = a quinol + NADP(+). Functionally, NADPH quinone oxidoreductase that efficiently reduces 1,4-benzoquinone, whereas no activities are found for menadiones and methoxyquinones. This chain is NADPH quinone oxidoreductase, found in Kluyveromyces marxianus (Yeast).